The following is a 206-amino-acid chain: Pyridoxine/pyridoxamine 5'-phosphate oxidase (206 aa).

Residues 53 to 58 (RMVLLK), 68 to 69 (YT), K75, and Q97 each bind FMN. K58 is a substrate binding site. Positions 115, 119, and 123 each coordinate substrate. Residues 132–133 (QS) and W177 each bind FMN. 183 to 185 (RLH) is a substrate binding site. R187 is an FMN binding site.

The protein belongs to the pyridoxamine 5'-phosphate oxidase family. In terms of assembly, homodimer. FMN serves as cofactor.

It carries out the reaction pyridoxamine 5'-phosphate + O2 + H2O = pyridoxal 5'-phosphate + H2O2 + NH4(+). It catalyses the reaction pyridoxine 5'-phosphate + O2 = pyridoxal 5'-phosphate + H2O2. The protein operates within cofactor metabolism; pyridoxal 5'-phosphate salvage; pyridoxal 5'-phosphate from pyridoxamine 5'-phosphate: step 1/1. It functions in the pathway cofactor metabolism; pyridoxal 5'-phosphate salvage; pyridoxal 5'-phosphate from pyridoxine 5'-phosphate: step 1/1. Catalyzes the oxidation of either pyridoxine 5'-phosphate (PNP) or pyridoxamine 5'-phosphate (PMP) into pyridoxal 5'-phosphate (PLP). The sequence is that of Pyridoxine/pyridoxamine 5'-phosphate oxidase from Rhizobium johnstonii (strain DSM 114642 / LMG 32736 / 3841) (Rhizobium leguminosarum bv. viciae).